Reading from the N-terminus, the 302-residue chain is Sulfate adenylyltransferase subunit 2 (302 aa).

Belongs to the PAPS reductase family. CysD subfamily. In terms of assembly, heterodimer composed of CysD, the smaller subunit, and CysN.

The enzyme catalyses sulfate + ATP + H(+) = adenosine 5'-phosphosulfate + diphosphate. The protein operates within sulfur metabolism; hydrogen sulfide biosynthesis; sulfite from sulfate: step 1/3. With CysN forms the ATP sulfurylase (ATPS) that catalyzes the adenylation of sulfate producing adenosine 5'-phosphosulfate (APS) and diphosphate, the first enzymatic step in sulfur assimilation pathway. APS synthesis involves the formation of a high-energy phosphoric-sulfuric acid anhydride bond driven by GTP hydrolysis by CysN coupled to ATP hydrolysis by CysD. This chain is Sulfate adenylyltransferase subunit 2, found in Escherichia coli O6:K15:H31 (strain 536 / UPEC).